The primary structure comprises 489 residues: Coronin-1B (489 aa).

Ser-2 carries the phosphoserine modification. 5 WD repeats span residues 80–120 (GHTG…LTSP), 130–170 (GHTK…ELYR), 174–213 (LHPDLIYNVSWNRNGSLFCSACKDKSVRIIDPRQGTLVAE), 217–260 (AHEG…EPMA), and 265–305 (DSSN…PYIH). The interval 414–443 (DSRPAMAPGSSRLGAPASTTAAADATPSGS) is disordered. Residues 427-443 (GAPASTTAAADATPSGS) are compositionally biased toward low complexity. The stretch at 449-474 (EAGKLEEVMQELRALRALVKEQGERI) forms a coiled coil.

Belongs to the WD repeat coronin family. As to quaternary structure, forms homooligomers, but does not form complexes with the other coronins. Interacts with Arp2/3 complex components, including ACTR2, ARPC1B and ARPC2. Binds actin. In terms of processing, phosphorylation on Ser-2 regulates the interaction with the Arp2/3 complex and cell motility in fibroblasts. Phosphorylation does not seem to affect subcellular location.

Its subcellular location is the cytoplasm. The protein resides in the cytoskeleton. It is found in the stress fiber. In terms of biological role, regulates leading edge dynamics and cell motility in fibroblasts. May be involved in cytokinesis and signal transduction. The chain is Coronin-1B (CORO1B) from Pongo abelii (Sumatran orangutan).